A 199-amino-acid polypeptide reads, in one-letter code: Pyrrolidone-carboxylate peptidase (199 aa).

Catalysis depends on residues E80, C142, and H166.

It belongs to the peptidase C15 family. Homotetramer.

Its subcellular location is the cytoplasm. The enzyme catalyses Release of an N-terminal pyroglutamyl group from a polypeptide, the second amino acid generally not being Pro.. Functionally, removes 5-oxoproline from various penultimate amino acid residues except L-proline. The protein is Pyrrolidone-carboxylate peptidase of Oceanobacillus iheyensis (strain DSM 14371 / CIP 107618 / JCM 11309 / KCTC 3954 / HTE831).